The chain runs to 193 residues: MVLFLIRIFSDSDKEENMGIEKTVSELADILGVSRQAVNNRVKSLPEEDLDKNEKGVTVVKRSGLVKLEEIYKKTIFDDEPISEETKQRELLEILVDEKNTEITRLYEQLKAKDAQLASKDEQMRVKDVQIAEKDKQLDQQQQLTAKAMADKETLKLELEEAKAEANQARLQVEEVQAEVGPKKGFLTRLFAK.

Residues 86–181 (TKQRELLEIL…QVEEVQAEVG (96 aa)) adopt a coiled-coil conformation.

This is an uncharacterized protein from Streptococcus pyogenes serotype M6 (strain ATCC BAA-946 / MGAS10394).